Here is a 279-residue protein sequence, read N- to C-terminus: Thymidylate synthase 1 (279 aa).

141–142 serves as a coordination point for dUMP; the sequence is RR. The Nucleophile role is filled by cysteine 161. DUMP contacts are provided by residues 181–184, asparagine 192, and 222–224; these read RSND and HVY. Aspartate 184 serves as a coordination point for (6R)-5,10-methylene-5,6,7,8-tetrahydrofolate. (6R)-5,10-methylene-5,6,7,8-tetrahydrofolate is bound at residue alanine 278.

It belongs to the thymidylate synthase family. Bacterial-type ThyA subfamily. Homodimer.

The protein resides in the cytoplasm. It catalyses the reaction dUMP + (6R)-5,10-methylene-5,6,7,8-tetrahydrofolate = 7,8-dihydrofolate + dTMP. It functions in the pathway pyrimidine metabolism; dTTP biosynthesis. Functionally, catalyzes the reductive methylation of 2'-deoxyuridine-5'-monophosphate (dUMP) to 2'-deoxythymidine-5'-monophosphate (dTMP) while utilizing 5,10-methylenetetrahydrofolate (mTHF) as the methyl donor and reductant in the reaction, yielding dihydrofolate (DHF) as a by-product. This enzymatic reaction provides an intracellular de novo source of dTMP, an essential precursor for DNA biosynthesis. In Bacillus subtilis (strain 168), this protein is Thymidylate synthase 1.